Consider the following 433-residue polypeptide: Trigger factor (433 aa).

The region spanning 161 to 246 is the PPIase FKBP-type domain; the sequence is EDRATIDFTG…LKKVEERELP (86 aa).

It belongs to the FKBP-type PPIase family. Tig subfamily.

It is found in the cytoplasm. It catalyses the reaction [protein]-peptidylproline (omega=180) = [protein]-peptidylproline (omega=0). Involved in protein export. Acts as a chaperone by maintaining the newly synthesized protein in an open conformation. Functions as a peptidyl-prolyl cis-trans isomerase. The chain is Trigger factor from Edwardsiella ictaluri (strain 93-146).